We begin with the raw amino-acid sequence, 84 residues long: Acid stress protein IbaG (84 aa).

This sequence belongs to the BolA/IbaG family.

Involved in cell resistance against acid stress. This is Acid stress protein IbaG from Escherichia coli O6:H1 (strain CFT073 / ATCC 700928 / UPEC).